Reading from the N-terminus, the 292-residue chain is tRNA pseudouridine synthase B (292 aa).

Asp-38 acts as the Nucleophile in catalysis.

It belongs to the pseudouridine synthase TruB family. Type 1 subfamily.

The enzyme catalyses uridine(55) in tRNA = pseudouridine(55) in tRNA. Functionally, responsible for synthesis of pseudouridine from uracil-55 in the psi GC loop of transfer RNAs. The protein is tRNA pseudouridine synthase B of Streptococcus pneumoniae serotype 4 (strain ATCC BAA-334 / TIGR4).